A 130-amino-acid chain; its full sequence is Small ribosomal subunit protein uS8 (130 aa).

It belongs to the universal ribosomal protein uS8 family. Part of the 30S ribosomal subunit. Contacts proteins S5 and S12.

In terms of biological role, one of the primary rRNA binding proteins, it binds directly to 16S rRNA central domain where it helps coordinate assembly of the platform of the 30S subunit. The polypeptide is Small ribosomal subunit protein uS8 (Shewanella denitrificans (strain OS217 / ATCC BAA-1090 / DSM 15013)).